We begin with the raw amino-acid sequence, 137 residues long: Large ribosomal subunit protein uL16 (137 aa).

This sequence belongs to the universal ribosomal protein uL16 family. Part of the 50S ribosomal subunit.

Binds 23S rRNA and is also seen to make contacts with the A and possibly P site tRNAs. This chain is Large ribosomal subunit protein uL16, found in Rhizobium rhizogenes (strain K84 / ATCC BAA-868) (Agrobacterium radiobacter).